We begin with the raw amino-acid sequence, 256 residues long: Photosystem I chlorophyll a/b-binding protein 5, chloroplastic (256 aa).

The N-terminal 32 residues, 1–32, are a transit peptide targeting the chloroplast; it reads MAVVLRGGITGGFLHHRRDASSVITRRISSVK. Ala-33 carries the N-acetylalanine modification. Trp-49 is a binding site for chlorophyll b. Residues Phe-69 and Glu-88 each coordinate chlorophyll a. Arg-93 contributes to the chlorophyll b binding site. Transmembrane regions (helical) follow at residues 94 to 113 and 129 to 146; these read FAML…TTGI and FAST…MGFA. 2 residues coordinate chlorophyll b: Glu-147 and Arg-150. Chlorophyll a contacts are provided by Lys-205, Glu-206, Asn-209, Arg-211, Gln-223, and His-238. Residues 212–232 form a helical membrane-spanning segment; sequence LAMMAMLGFFVQASVTHTGPI.

Belongs to the light-harvesting chlorophyll a/b-binding (LHC) protein family. As to quaternary structure, the LHC complex consists of chlorophyll a-b binding proteins. Homodimer. Heterodimer with LHCA2 and, possibly, LHCA3. Can substitute to LHCA4 to form a complex with LHCA1. Binds pigments. Element of the NAD(P)H dehydrogenase-photosystem I supercomplex (NDH-PSI). Binds at least 14 chlorophylls (8 Chl-a and 6 Chl-b) and carotenoids such as lutein and neoxanthin. is required as a cofactor. In terms of processing, photoregulated by reversible phosphorylation of its threonine residues.

The protein localises to the plastid. It is found in the chloroplast thylakoid membrane. The light-harvesting complex (LHC) functions as a light receptor, it captures and delivers excitation energy to photosystems with which it is closely associated. Seems involved in the function of the photosystem I in low light conditions, when other LHCA proteins are less abundant. Required, together with LHCA6, for the formation of a full-size NAD(P)H dehydrogenase-photosystem I supercomplex (NDH-PSI) that triggers cyclic and chlororespiratory electron transport in chloroplast thylakoids, especially under stress conditions (e.g. increased light intensity). The chain is Photosystem I chlorophyll a/b-binding protein 5, chloroplastic from Arabidopsis thaliana (Mouse-ear cress).